The primary structure comprises 249 residues: Small ribosomal subunit protein eS6 (249 aa).

Lys14 participates in a covalent cross-link: Glycyl lysine isopeptide (Lys-Gly) (interchain with G-Cter in SUMO2). Glu35 bears the ADP-ribosyl glutamic acid mark. Arg137 bears the (3R)-3-hydroxyarginine mark. The residue at position 148 (Ser148) is a Phosphoserine. Lys211 bears the N6-acetyllysine mark. The span at 217–229 (MKEAKEKRQEQIA) shows a compositional bias: basic and acidic residues. A disordered region spans residues 217–249 (MKEAKEKRQEQIAKRRRLSSLRASTSKSESSQK). Residues Ser235, Ser236, Ser240, Ser242, Ser244, and Ser247 each carry the phosphoserine modification. Low complexity predominate over residues 236–249 (SLRASTSKSESSQK).

This sequence belongs to the eukaryotic ribosomal protein eS6 family. In terms of assembly, component of the small ribosomal subunit. Part of the small subunit (SSU) processome, composed of more than 70 proteins and the RNA chaperone small nucleolar RNA (snoRNA) U3. Ribosomal protein S6 is the major substrate of protein kinases in eukaryote ribosomes. The phosphorylation is stimulated by growth factors, tumor promoting agents, and mitogens. It is dephosphorylated at growth arrest. Phosphorylated at Ser-235 and Ser-236 by RPS6KA1 and RPS6KA3; phosphorylation at these sites facilitates the assembly of the pre-initiation complex. Post-translationally, specifically hydroxylated (with R stereochemistry) at C-3 of Arg-137 by KDM8. In terms of processing, mono-ADP-ribosylation at Glu-35 by PARP16 inhibits polysome assembly and mRNA loading, thereby inhibiting protein translation.

It is found in the cytoplasm. The protein resides in the nucleus. It localises to the nucleolus. In terms of biological role, component of the 40S small ribosomal subunit. Plays an important role in controlling cell growth and proliferation through the selective translation of particular classes of mRNA. Part of the small subunit (SSU) processome, first precursor of the small eukaryotic ribosomal subunit. During the assembly of the SSU processome in the nucleolus, many ribosome biogenesis factors, an RNA chaperone and ribosomal proteins associate with the nascent pre-rRNA and work in concert to generate RNA folding, modifications, rearrangements and cleavage as well as targeted degradation of pre-ribosomal RNA by the RNA exosome. In Oryctolagus cuniculus (Rabbit), this protein is Small ribosomal subunit protein eS6 (RPS6).